The following is a 219-amino-acid chain: Ribose-5-phosphate isomerase A (219 aa).

Substrate-binding positions include 28 to 31 (SGST), 81 to 84 (DGAD), and 94 to 97 (KGGG). Glutamate 103 acts as the Proton acceptor in catalysis. Lysine 121 is a substrate binding site.

Belongs to the ribose 5-phosphate isomerase family. In terms of assembly, homodimer.

It carries out the reaction aldehydo-D-ribose 5-phosphate = D-ribulose 5-phosphate. The protein operates within carbohydrate degradation; pentose phosphate pathway; D-ribose 5-phosphate from D-ribulose 5-phosphate (non-oxidative stage): step 1/1. Functionally, catalyzes the reversible conversion of ribose-5-phosphate to ribulose 5-phosphate. The chain is Ribose-5-phosphate isomerase A from Haemophilus influenzae (strain PittGG).